The chain runs to 415 residues: F-box/kelch-repeat protein At2g29600 (415 aa).

The tract at residues 1–58 (MASISETSDDGSNGGDPNQKPEEPHKNPQEGKEEENQNEKPKEDDHQEEEVENVPQIP) is disordered. Positions 19 to 45 (QKPEEPHKNPQEGKEEENQNEKPKEDD) are enriched in basic and acidic residues. An F-box domain is found at 56–103 (QIPPQMPLELIVSTIATLRRCHYPTLSLLSDSFRQVISSVDLFQTRSL). 4 Kelch repeats span residues 161–208 (KIYV…VIDG), 210–254 (IYVV…FNVH), 260–309 (KIYI…AVVP), and 311–355 (HLHV…KLMI).

The sequence is that of F-box/kelch-repeat protein At2g29600 from Arabidopsis thaliana (Mouse-ear cress).